The primary structure comprises 121 residues: Large ribosomal subunit protein uL14c (121 aa).

The protein belongs to the universal ribosomal protein uL14 family. As to quaternary structure, part of the 50S ribosomal subunit.

It is found in the plastid. It localises to the organellar chromatophore. Functionally, binds to 23S rRNA. This Paulinella chromatophora protein is Large ribosomal subunit protein uL14c.